We begin with the raw amino-acid sequence, 404 residues long: G2/mitotic-specific cyclin-B1 (404 aa).

It belongs to the cyclin family. Cyclin AB subfamily. As to quaternary structure, interacts with the CDK1 protein kinase to form a serine/threonine kinase holoenzyme complex also known as maturation promoting factor (MPF). The cyclin subunit imparts substrate specificity to the complex.

In terms of biological role, essential for the control of the cell cycle at the G2/M (mitosis) transition. This chain is G2/mitotic-specific cyclin-B1 (ccnb1), found in Oryzias latipes (Japanese rice fish).